Here is a 417-residue protein sequence, read N- to C-terminus: Serine hydroxymethyltransferase (417 aa).

(6S)-5,6,7,8-tetrahydrofolate-binding positions include Leu-120 and 124–126 (GHL). An N6-(pyridoxal phosphate)lysine modification is found at Lys-229.

The protein belongs to the SHMT family. In terms of assembly, homodimer. The cofactor is pyridoxal 5'-phosphate.

It is found in the cytoplasm. The enzyme catalyses (6R)-5,10-methylene-5,6,7,8-tetrahydrofolate + glycine + H2O = (6S)-5,6,7,8-tetrahydrofolate + L-serine. The protein operates within one-carbon metabolism; tetrahydrofolate interconversion. Its pathway is amino-acid biosynthesis; glycine biosynthesis; glycine from L-serine: step 1/1. Catalyzes the reversible interconversion of serine and glycine with tetrahydrofolate (THF) serving as the one-carbon carrier. This reaction serves as the major source of one-carbon groups required for the biosynthesis of purines, thymidylate, methionine, and other important biomolecules. Also exhibits THF-independent aldolase activity toward beta-hydroxyamino acids, producing glycine and aldehydes, via a retro-aldol mechanism. The protein is Serine hydroxymethyltransferase of Anaeromyxobacter sp. (strain K).